The sequence spans 293 residues: Proline iminopeptidase (293 aa).

The Nucleophile role is filled by Ser-105. The active site involves Asp-244. The active-site Proton donor is His-271.

Belongs to the peptidase S33 family. Part of the tricorn proteolytic complex.

It catalyses the reaction Release of N-terminal proline from a peptide.. Functionally, cleaves H-Pro-AMC as well as a wide spectrum of amino acid substrates and several peptide substrates without a proline at the N-terminus. Proteases F1, F2 and F3 degrade oligopeptides produced by Tricorn (themselves probably produced by the proteasome) yielding free amino acids. The sequence is that of Proline iminopeptidase (pip) from Thermoplasma acidophilum (strain ATCC 25905 / DSM 1728 / JCM 9062 / NBRC 15155 / AMRC-C165).